Consider the following 300-residue polypeptide: 7-methylguanosine phosphate-specific 5'-nucleotidase (300 aa).

Catalysis depends on D41, which acts as the Nucleophile. Residues D41 and D43 each coordinate Mg(2+). D43 functions as the Proton donor in the catalytic mechanism. E88 lines the CMP pocket. Residue E88 participates in N(7)-methyl-GMP binding. Substrate-binding positions include 156-157 (SA) and K205. Mg(2+) is bound at residue D230. K256 carries the post-translational modification N6-acetyllysine.

This sequence belongs to the pyrimidine 5'-nucleotidase family. In terms of assembly, monomer.

It localises to the cytoplasm. The catalysed reaction is N(7)-methyl-GMP + H2O = N(7)-methylguanosine + phosphate. It carries out the reaction CMP + H2O = cytidine + phosphate. The enzyme catalyses a ribonucleoside 5'-phosphate + H2O = a ribonucleoside + phosphate. Specifically hydrolyzes 7-methylguanosine monophosphate (m(7)GMP) to 7-methylguanosine and inorganic phosphate. The specific activity for m(7)GMP may protect cells against undesired salvage of m(7)GMP and its incorporation into nucleic acids. Also has weak activity for CMP. UMP and purine nucleotides are poor substrates. This Homo sapiens (Human) protein is 7-methylguanosine phosphate-specific 5'-nucleotidase (NT5C3B).